Consider the following 428-residue polypeptide: Histidine--tRNA ligase (428 aa).

The protein belongs to the class-II aminoacyl-tRNA synthetase family. Homodimer.

It localises to the cytoplasm. The enzyme catalyses tRNA(His) + L-histidine + ATP = L-histidyl-tRNA(His) + AMP + diphosphate + H(+). The sequence is that of Histidine--tRNA ligase from Azotobacter vinelandii (strain DJ / ATCC BAA-1303).